The following is a 618-amino-acid chain: Nuclear RNA export factor 1 (618 aa).

Residues 1 to 15 (MADEGKSYNEHDDRV) are compositionally biased toward basic and acidic residues. The segment at 1-113 (MADEGKSYNE…RGGAGTSQDG (113 aa)) is disordered. At Ala2 the chain carries N-acetylalanine. The segment at 2–59 (ADEGKSYNEHDDRVSFPQRRKKGRGPFRWKCGVGNRRSGRGGSGIRSSRFEEDDGDVA) is minor non-specific RNA-binding. The RNA-binding (RBD) stretch occupies residues 2–117 (ADEGKSYNEH…GTSQDGTTKN (116 aa)). An interaction with ALYREF/THOC4 and LUZP4 region spans residues 2–197 (ADEGKSYNEH…IIINSSAPPY (196 aa)). A compositionally biased stretch (basic residues) spans 19–28 (QRRKKGRGPF). Arg41 is subject to Asymmetric dimethylarginine; alternate. Arg41 is subject to Omega-N-methylarginine; alternate. A major non-specific RNA-binding region spans residues 60 to 117 (MNDPQDGPRVRFNPYTTRPNRRRDTWHDRDRIHVTVRRDRAPQERGGAGTSQDGTTKN). Residues 60–117 (MNDPQDGPRVRFNPYTTRPNRRRDTWHDRDRIHVTVRRDRAPQERGGAGTSQDGTTKN) form an RNA binding region. The short motif at 66–99 (GPRVRFNPYTTRPNRRRDTWHDRDRIHVTVRRDR) is the Nuclear localization signal element. A compositionally biased stretch (basic and acidic residues) spans 81–102 (RRDTWHDRDRIHVTVRRDRAPQ). The Nuclear export signal signature appears at 82-109 (RDTWHDRDRIHVTVRRDRAPQERGGAGT). The 80-residue stretch at 118–197 (WFKITIPYGK…IIINSSAPPY (80 aa)) folds into the RRM domain. Tyr125 is subject to 3'-nitrotyrosine. LRR repeat units follow at residues 265-290 (ELLS…QKAP), 291-314 (NLKI…IKGL), 315-342 (KLEE…TIRE), and 343-370 (RFPK…TMLP). An NTF2 domain is found at 385–535 (LVLHFLQQYY…LCIVNDELFV (151 aa)). Positions 564 to 618 (QEQQDMLQAFSTQSGMNLEWSQKCLQDNNWDYTRSAQAFTHLKAKGEIPEVAFMK) constitute a TAP-C domain.

The protein belongs to the NXF family. In terms of assembly, heterodimer (via NTF2 domain) with NXT1. The formation of NXF1-NXT1 heterodimers is required for the NXF1-mediated nuclear mRNA export. Forms a complex with RANBP2/NUP358, NXT1 and RANGAP1. Associates with the exon junction complex (EJC). Associates with the transcription/export (TREX) complex. Found in a mRNA complex with UPF3A and UPF3B. Found in a post-splicing complex with RBM8A, UPF1, UPF2, UPF3A, UPF3B and RNPS1. Interacts (via N-terminus) with DHX9 (via N-terminus); this interaction is direct and negatively regulates NXF1-mediated nuclear export of constitutive transport element (CTE)-containing cellular mRNAs. Interacts with FYTTD1/UIF. Interacts with EIF4A3. Interacts with NUP42. Interacts with ALYREF/THOC4. Interacts with CHTOP. Interacts with FRG1 (via N-terminus). Interacts with LUZP4. Interacts with FMR1; the interaction occurs in a mRNA-dependent and polyribosomes-independent manner in the nucleus. Interacts with CPSF6 (via N-terminus); this interaction is direct. Interacts with RBM15. Interacts with RBM15B. Interacts with MCM3AP; this interaction is not mediated by RNA. Interacts with DDX3X (via C-terminus); this interaction may be partly involved in DDX3X nuclear export and in NXF1 localization to stress granules. Interacts with PABPC1/PABP1.

The protein resides in the nucleus. It localises to the nucleoplasm. The protein localises to the nucleus speckle. It is found in the nuclear pore complex. Its subcellular location is the nucleus envelope. The protein resides in the cytoplasm. It localises to the stress granule. Involved in the nuclear export of mRNA species bearing retroviral constitutive transport elements (CTE) and in the export of mRNA from the nucleus to the cytoplasm (TAP/NFX1 pathway). The NXF1-NXT1 heterodimer is involved in the export of HSP70 mRNA in conjunction with ALYREF/THOC4 and THOC5 components of the TREX complex. ALYREF/THOC4-bound mRNA is thought to be transferred to the NXF1-NXT1 heterodimer for export. Also involved in nuclear export of m6A-containing mRNAs: interaction between SRSF3 and YTHDC1 facilitates m6A-containing mRNA-binding to both SRSF3 and NXF1, promoting mRNA nuclear export. In Rattus norvegicus (Rat), this protein is Nuclear RNA export factor 1 (Nxf1).